A 358-amino-acid polypeptide reads, in one-letter code: Peptide chain release factor 1 (358 aa).

An N5-methylglutamine modification is found at Gln-233.

Belongs to the prokaryotic/mitochondrial release factor family. Methylated by PrmC. Methylation increases the termination efficiency of RF1.

It localises to the cytoplasm. Functionally, peptide chain release factor 1 directs the termination of translation in response to the peptide chain termination codons UAG and UAA. The polypeptide is Peptide chain release factor 1 (Brevibacillus brevis (strain 47 / JCM 6285 / NBRC 100599)).